The sequence spans 44 residues: Cytochrome b559 subunit beta (44 aa).

Residues 19 to 35 (WLAVHTLGVPTVFFLGA) traverse the membrane as a helical segment. Residue His-23 participates in heme binding.

The protein belongs to the PsbE/PsbF family. In terms of assembly, heterodimer of an alpha subunit and a beta subunit. PSII is composed of 1 copy each of membrane proteins PsbA, PsbB, PsbC, PsbD, PsbE, PsbF, PsbH, PsbI, PsbJ, PsbK, PsbL, PsbM, PsbT, PsbX, PsbY, PsbZ, Psb30/Ycf12, peripheral proteins PsbO, CyanoQ (PsbQ), PsbU, PsbV and a large number of cofactors. It forms dimeric complexes. The cofactor is heme b.

It is found in the cellular thylakoid membrane. In terms of biological role, this b-type cytochrome is tightly associated with the reaction center of photosystem II (PSII). PSII is a light-driven water:plastoquinone oxidoreductase that uses light energy to abstract electrons from H(2)O, generating O(2) and a proton gradient subsequently used for ATP formation. It consists of a core antenna complex that captures photons, and an electron transfer chain that converts photonic excitation into a charge separation. The chain is Cytochrome b559 subunit beta from Trichodesmium erythraeum (strain IMS101).